We begin with the raw amino-acid sequence, 482 residues long: QWRF motif-containing protein 3 (482 aa).

Basic and acidic residues predominate over residues 1–20 (MKSCEHELLKTRRGKSREVS). Disordered regions lie at residues 1-60 (MKSC…GLKK) and 171-220 (TAKP…QWAL). The span at 21–42 (SRFLSSPSASSSPNRRNSTSNS) shows a compositional bias: low complexity. The span at 191-219 (RTNSSKGIENRLQRNNSVSRYGSSMSQWA) shows a compositional bias: polar residues. The QWRF motif signature appears at 292 to 295 (QWRF).

It belongs to the QWRF family.

The protein is QWRF motif-containing protein 3 (QWRF3) of Arabidopsis thaliana (Mouse-ear cress).